The chain runs to 66 residues: Beta-defensin 107A (66 aa).

A signal peptide spans 1-22; it reads MKIFFFIFAALILLAQIFQART. 2 disulfides stabilise this stretch: cysteine 37-cysteine 51 and cysteine 41-cysteine 60.

This sequence belongs to the beta-defensin family.

It localises to the secreted. Its function is as follows. Has antibacterial activity. The chain is Beta-defensin 107A (DEFB107A) from Macaca fascicularis (Crab-eating macaque).